Consider the following 283-residue polypeptide: Bifunctional protein FolD (283 aa).

Residues 165–167 (GRS), S190, and I231 contribute to the NADP(+) site.

Belongs to the tetrahydrofolate dehydrogenase/cyclohydrolase family. Homodimer.

The enzyme catalyses (6R)-5,10-methylene-5,6,7,8-tetrahydrofolate + NADP(+) = (6R)-5,10-methenyltetrahydrofolate + NADPH. The catalysed reaction is (6R)-5,10-methenyltetrahydrofolate + H2O = (6R)-10-formyltetrahydrofolate + H(+). It participates in one-carbon metabolism; tetrahydrofolate interconversion. In terms of biological role, catalyzes the oxidation of 5,10-methylenetetrahydrofolate to 5,10-methenyltetrahydrofolate and then the hydrolysis of 5,10-methenyltetrahydrofolate to 10-formyltetrahydrofolate. This chain is Bifunctional protein FolD, found in Herminiimonas arsenicoxydans.